The following is a 664-amino-acid chain: Protein-arginine deiminase type-3 (664 aa).

This sequence belongs to the protein arginine deiminase family. Ca(2+) serves as cofactor. In terms of tissue distribution, epidermis and hair follicles.

The protein resides in the cytoplasm. The catalysed reaction is L-arginyl-[protein] + H2O = L-citrullyl-[protein] + NH4(+). In terms of biological role, catalyzes the deimination of arginine residues of proteins. The protein is Protein-arginine deiminase type-3 (Padi3) of Rattus norvegicus (Rat).